Consider the following 85-residue polypeptide: MSKNQLNLQDAFLNQVRKENVGVTIFLINGFQLKGFVKGFDNFTVILESEGKQHMIYKHAISTIIPQRPVNTYLAKGGNEENTPS.

A Sm domain is found at 10–70; that stretch reads DAFLNQVRKE…ISTIIPQRPV (61 aa).

This sequence belongs to the Hfq family. In terms of assembly, homohexamer.

RNA chaperone that binds small regulatory RNA (sRNAs) and mRNAs to facilitate mRNA translational regulation in response to envelope stress, environmental stress and changes in metabolite concentrations. Also binds with high specificity to tRNAs. In Carboxydothermus hydrogenoformans (strain ATCC BAA-161 / DSM 6008 / Z-2901), this protein is RNA-binding protein Hfq.